A 139-amino-acid polypeptide reads, in one-letter code: Large ribosomal subunit protein uL16 (139 aa).

The span at 1–20 shows a compositional bias: basic residues; sequence MLIPRRVKHRKQHHPKRRGQ. The tract at residues 1-25 is disordered; sequence MLIPRRVKHRKQHHPKRRGQAKGGT.

Belongs to the universal ribosomal protein uL16 family. As to quaternary structure, part of the 50S ribosomal subunit.

Functionally, binds 23S rRNA and is also seen to make contacts with the A and possibly P site tRNAs. This Streptomyces avermitilis (strain ATCC 31267 / DSM 46492 / JCM 5070 / NBRC 14893 / NCIMB 12804 / NRRL 8165 / MA-4680) protein is Large ribosomal subunit protein uL16.